Consider the following 211-residue polypeptide: Large ribosomal subunit protein eL13 (211 aa).

The residue at position 16 (Lys-16) is an N6-acetyllysine. Phosphoserine is present on residues Ser-52, Ser-77, and Ser-106. Glycyl lysine isopeptide (Lys-Gly) (interchain with G-Cter in SUMO2) cross-links involve residues Lys-123 and Lys-145. Residue Lys-174 forms a Glycyl lysine isopeptide (Lys-Gly) (interchain with G-Cter in SUMO1); alternate linkage. Glycyl lysine isopeptide (Lys-Gly) (interchain with G-Cter in SUMO2); alternate cross-links involve residues Lys-174 and Lys-177. Lys-177 bears the N6-acetyllysine; alternate mark.

It belongs to the eukaryotic ribosomal protein eL13 family. In terms of assembly, component of the large ribosomal subunit.

It is found in the cytoplasm. Its function is as follows. Component of the large ribosomal subunit. The ribosome is a large ribonucleoprotein complex responsible for the synthesis of proteins in the cell. This chain is Large ribosomal subunit protein eL13 (Rpl13), found in Mus musculus (Mouse).